A 121-amino-acid polypeptide reads, in one-letter code: Large ribosomal subunit protein uL14c (121 aa).

As to quaternary structure, component of the chloroplast large ribosomal subunit (LSU). Mature 70S chloroplast ribosomes of higher plants consist of a small (30S) and a large (50S) subunit. The 30S small subunit contains 1 molecule of ribosomal RNA (16S rRNA) and 24 different proteins. The 50S large subunit contains 3 rRNA molecules (23S, 5S and 4.5S rRNA) and 33 different proteins.

It localises to the plastid. Its subcellular location is the chloroplast. Functionally, component of the chloroplast ribosome (chloro-ribosome), a dedicated translation machinery responsible for the synthesis of chloroplast genome-encoded proteins, including proteins of the transcription and translation machinery and components of the photosynthetic apparatus. The chain is Large ribosomal subunit protein uL14c from Spinacia oleracea (Spinach).